The chain runs to 221 residues: MKTAVIQFPGSNCDADALHAARLLLDDGAQFVWHTETALPEGTELVFLPGGFSYGDHLRSGAIAARSPIMNAVKAHAEAGGYVLGVCNGFQVLTEAGLLPGALSRNKELHFMCKPVHLRVENNATDFSRAYGPGQIIEIPIAHGEGNYYADAATIAELEEGGRVVFRYADNPNGSLNDIAGIVNERGNVLGMMPHPERAVELLLGSEDGKGVFESLKTVKK.

The region spanning 2-221 (KTAVIQFPGS…VFESLKTVKK (220 aa)) is the Glutamine amidotransferase type-1 domain. Catalysis depends on Cys87, which acts as the Nucleophile. Catalysis depends on residues His195 and Glu197.

As to quaternary structure, part of the FGAM synthase complex composed of 1 PurL, 1 PurQ and 2 PurS subunits.

It is found in the cytoplasm. It catalyses the reaction N(2)-formyl-N(1)-(5-phospho-beta-D-ribosyl)glycinamide + L-glutamine + ATP + H2O = 2-formamido-N(1)-(5-O-phospho-beta-D-ribosyl)acetamidine + L-glutamate + ADP + phosphate + H(+). The catalysed reaction is L-glutamine + H2O = L-glutamate + NH4(+). Its pathway is purine metabolism; IMP biosynthesis via de novo pathway; 5-amino-1-(5-phospho-D-ribosyl)imidazole from N(2)-formyl-N(1)-(5-phospho-D-ribosyl)glycinamide: step 1/2. Functionally, part of the phosphoribosylformylglycinamidine synthase complex involved in the purines biosynthetic pathway. Catalyzes the ATP-dependent conversion of formylglycinamide ribonucleotide (FGAR) and glutamine to yield formylglycinamidine ribonucleotide (FGAM) and glutamate. The FGAM synthase complex is composed of three subunits. PurQ produces an ammonia molecule by converting glutamine to glutamate. PurL transfers the ammonia molecule to FGAR to form FGAM in an ATP-dependent manner. PurS interacts with PurQ and PurL and is thought to assist in the transfer of the ammonia molecule from PurQ to PurL. The polypeptide is Phosphoribosylformylglycinamidine synthase subunit PurQ (Deinococcus radiodurans (strain ATCC 13939 / DSM 20539 / JCM 16871 / CCUG 27074 / LMG 4051 / NBRC 15346 / NCIMB 9279 / VKM B-1422 / R1)).